Consider the following 92-residue polypeptide: Small ribosomal subunit protein uS19 (92 aa).

The protein belongs to the universal ribosomal protein uS19 family. Part of the 30S ribosomal subunit.

Functionally, protein S19 forms a complex with S13 that binds strongly to the 16S ribosomal RNA. The chain is Small ribosomal subunit protein uS19 (rpsS) from Bacillus subtilis (strain 168).